Here is a 217-residue protein sequence, read N- to C-terminus: Zinc finger CCHC-type and RNA-binding motif-containing protein 1 (217 aa).

The RRM domain maps to 10-88; sequence STVYVSNLPF…RVIKASIAID (79 aa). The CCHC-type zinc finger occupies 105–122; sequence SKCYECGESGHLSYACPK. Residues 120–217 form a disordered region; sequence CPKNMLGERE…YFSDEEELSD (98 aa). Acidic residues predominate over residues 145-163; sequence PEEEIEEVEESEDEGEDPA. 3 positions are modified to phosphoserine: S155, S210, and S216.

As to quaternary structure, component of the U11/U12 snRNPs that are part of the U12-type spliceosome.

The protein localises to the nucleus. Its subcellular location is the nucleoplasm. The protein is Zinc finger CCHC-type and RNA-binding motif-containing protein 1 (ZCRB1) of Homo sapiens (Human).